A 189-amino-acid chain; its full sequence is Probable nicotinate-nucleotide adenylyltransferase (189 aa).

Belongs to the NadD family.

The catalysed reaction is nicotinate beta-D-ribonucleotide + ATP + H(+) = deamido-NAD(+) + diphosphate. Its pathway is cofactor biosynthesis; NAD(+) biosynthesis; deamido-NAD(+) from nicotinate D-ribonucleotide: step 1/1. In terms of biological role, catalyzes the reversible adenylation of nicotinate mononucleotide (NaMN) to nicotinic acid adenine dinucleotide (NaAD). This Staphylococcus aureus (strain bovine RF122 / ET3-1) protein is Probable nicotinate-nucleotide adenylyltransferase.